The primary structure comprises 550 residues: Probable terpene synthase 2 (550 aa).

Mg(2+) contacts are provided by D305, D309, and E457. Residues 305 to 309 (DDIYD) carry the DDXXD motif motif.

The protein belongs to the terpene synthase family. Mg(2+) serves as cofactor.

Probable sesquiterpene synthase. The sequence is that of Probable terpene synthase 2 (TPS2) from Ricinus communis (Castor bean).